Reading from the N-terminus, the 163-residue chain is Nucleotide-binding protein HSM_1099 (163 aa).

This sequence belongs to the YajQ family.

Nucleotide-binding protein. The chain is Nucleotide-binding protein HSM_1099 from Histophilus somni (strain 2336) (Haemophilus somnus).